Consider the following 184-residue polypeptide: Ras protein let-60 (184 aa).

10–17 lines the GTP pocket; sequence GDGGVGKS. The Effector region motif lies at 32–40; the sequence is YDPTIEDSY. GTP-binding positions include 57–61 and 116–119; these read DTAGQ and NKCD. Cys-181 is subject to Cysteine methyl ester. The S-farnesyl cysteine moiety is linked to residue Cys-181. Residues 182 to 184 constitute a propeptide, removed in mature form; that stretch reads QIM.

Belongs to the small GTPase superfamily. Ras family. As to quaternary structure, interacts with soc-2. Interacts (in GTP-bound form) with plc-1 (via Ras-associating domain 1). As to expression, expressed in body wall muscles and in the nervous system including ganglion, nerve ring dorsal and ventral nerve cords, motor neurons and sensory tail neurons.

It is found in the cell membrane. It carries out the reaction GTP + H2O = GDP + phosphate + H(+). In terms of biological role, GTP-binding protein with GTPase activity. The level of let-60 controls the switch between vulval and hypodermal cell fates during C.elegans vulval induction. May stimulate the guanine nucleotide exchange factor (GEF) activity of rap-1. May induce nuclear condensation. This Caenorhabditis elegans protein is Ras protein let-60.